Reading from the N-terminus, the 222-residue chain is Nudix hydrolase 11 (222 aa).

Positions Ala31 to Phe175 constitute a Nudix hydrolase domain. Residues Gly73–Gly96 carry the Nudix box motif. Residues Glu90 and Glu94 each coordinate Mg(2+). The helical transmembrane segment at Phe186–Tyr204 threads the bilayer.

Belongs to the Nudix hydrolase family. PCD1 subfamily. Mn(2+) serves as cofactor. Requires Mg(2+) as cofactor. Expressed in roots, stems and leaves.

The protein resides in the peroxisome membrane. Its function is as follows. Coenzyme A diphosphatase which mediates the cleavage of CoA into 3',5'-ADP from CoA and 4'-phosphopantetheine. Can use malonyl-CoA, hexanoyl-CoA, lauroyl-CoA, myristoyl-CoA and palmitoyl-CoA as substrates, but not isobutyryl-CoA or propionyl-CoA. This Arabidopsis thaliana (Mouse-ear cress) protein is Nudix hydrolase 11 (NUDT11).